The sequence spans 385 residues: MRLLKSHPLLKLVNSYLIDASQPSNISYLWNFGSLLACCLIIQIVTGVTLAMHYSPNVLEAFNSIEHIMRDVNNGWLVRYLHSNTASAFFFLVYLHIGRGMYYGSYRAPRTLVWAIGTVILILMMATAFLGYVLPYGQMSLWGATVITNLISAIPWIGQDIVEFIWGGFSVNNATLNRFFALHFVLPFILAALVLMHLIALHDTAGSSNPLGVSGNYDRITFAPYYLFKDLITIFIFIYVLSSFVFFMPNVLGDSENYIMANPMQTPPAIVPEWYLLPFYAILRSIPNKLLGVIAMFSAILAIMLLPITDLGRSKGLQFRPLSKFAFWAFVVNFLILMKLGACHVESPFIELGQFSTIFYFSYFIFIVPVLSLIENTLVDLNYLK.

Residues 1–27 (MRLLKSHPLLKLVNSYLIDASQPSNIS) lie on the Mitochondrial matrix side of the membrane. Tyrosine 16 contacts a ubiquinone. The chain crosses the membrane as a helical span at residues 28-51 (YLWNFGSLLACCLIIQIVTGVTLA). The Mitochondrial intermembrane segment spans residues 52–74 (MHYSPNVLEAFNSIEHIMRDVNN). The chain crosses the membrane as a helical span at residues 75 to 102 (GWLVRYLHSNTASAFFFLVYLHIGRGMY). Heme b-binding residues include histidine 82 and histidine 96. The Mitochondrial matrix portion of the chain corresponds to 103-110 (YGSYRAPR). Residues 111–135 (TLVWAIGTVILILMMATAFLGYVLP) traverse the membrane as a helical segment. Over 136–172 (YGQMSLWGATVITNLISAIPWIGQDIVEFIWGGFSVN) the chain is Mitochondrial intermembrane. The helical transmembrane segment at 173–205 (NATLNRFFALHFVLPFILAALVLMHLIALHDTA) threads the bilayer. 2 residues coordinate heme b: histidine 183 and histidine 197. Histidine 202 contributes to the a ubiquinone binding site. Topologically, residues 206–224 (GSSNPLGVSGNYDRITFAP) are mitochondrial matrix. Residues 225–247 (YYLFKDLITIFIFIYVLSSFVFF) traverse the membrane as a helical segment. Topologically, residues 248 to 288 (MPNVLGDSENYIMANPMQTPPAIVPEWYLLPFYAILRSIPN) are mitochondrial intermembrane. The helical transmembrane segment at 289–309 (KLLGVIAMFSAILAIMLLPIT) threads the bilayer. The Mitochondrial matrix portion of the chain corresponds to 310–320 (DLGRSKGLQFR). A helical transmembrane segment spans residues 321-341 (PLSKFAFWAFVVNFLILMKLG). The Mitochondrial intermembrane segment spans residues 342–348 (ACHVESP). Residues 349-365 (FIELGQFSTIFYFSYFI) traverse the membrane as a helical segment. The Mitochondrial matrix portion of the chain corresponds to 366–385 (FIVPVLSLIENTLVDLNYLK).

This sequence belongs to the cytochrome b family. As to quaternary structure, component of the ubiquinol-cytochrome c oxidoreductase (cytochrome b-c1 complex, complex III, CIII), a multisubunit enzyme composed of 10 subunits. The complex is composed of 3 respiratory subunits cytochrome b (cob), cytochrome c1 (cyt-1) and Rieske protein (fes-1), 2 core protein subunits pep and ucr-1, and 5 low-molecular weight protein subunits qcr6, qcr7, qcr8, qcr9 and probably NCU16844/qcr10. The complex exists as an obligatory dimer and forms supercomplexes (SCs) in the inner mitochondrial membrane with NADH-ubiquinone oxidoreductase (complex I, CI) and cytochrome c oxidase (complex IV, CIV), resulting in different assemblies (supercomplexes SCI(1)III(2), SCIII(2)IV(1) and SCIII(2)IV(2) as well as higher order I(x)III(y)IV(z) megacomplexes). Requires heme b as cofactor.

The protein localises to the mitochondrion inner membrane. It carries out the reaction a quinol + 2 Fe(III)-[cytochrome c](out) = a quinone + 2 Fe(II)-[cytochrome c](out) + 2 H(+)(out). Its function is as follows. Component of the ubiquinol-cytochrome c oxidoreductase, a multisubunit transmembrane complex that is part of the mitochondrial electron transport chain which drives oxidative phosphorylation. The respiratory chain contains 3 multisubunit complexes succinate dehydrogenase (complex II, CII), ubiquinol-cytochrome c oxidoreductase (cytochrome b-c1 complex, complex III, CIII) and cytochrome c oxidase (complex IV, CIV), that cooperate to transfer electrons derived from NADH and succinate to molecular oxygen, creating an electrochemical gradient over the inner membrane that drives transmembrane transport and the ATP synthase. The cytochrome b-c1 complex catalyzes electron transfer from ubiquinol to cytochrome c, linking this redox reaction to translocation of protons across the mitochondrial inner membrane, with protons being carried across the membrane as hydrogens on the quinol. In the process called Q cycle, 2 protons are consumed from the matrix, 4 protons are released into the intermembrane space and 2 electrons are passed to cytochrome c. Cytochrome b is a catalytic core subunit containing 2 b-type hemes BL and BH topographically segregated in the quinone reduction (Qi) and quinol oxidation (Q0) sites on opposite sides of the membrane. The polypeptide is Cytochrome b (cob) (Neurospora crassa (strain ATCC 24698 / 74-OR23-1A / CBS 708.71 / DSM 1257 / FGSC 987)).